A 172-amino-acid polypeptide reads, in one-letter code: R-phycocyanin-1 beta chain (172 aa).

Asparagine 72 carries the N4-methylasparagine modification. Residue cysteine 82 participates in (2R,3E)-phycocyanobilin binding. Cysteine 153 is a binding site for (2R,3E)-phycoerythrobilin.

It belongs to the phycobiliprotein family. Heterodimer of an alpha and a beta chain. Dimers further assemble into trimers and the trimers into hexamers. The basic functional unit of phycobiliproteins is a ring-shaped hexamer formed from two back-to-back trimers contacting via the alpha chain subunits. The trimers are composed of alpha/beta subunit heterodimers arranged around a three-fold axis of symmetry. The phycoerythrins also contain a gamma subunit which is located in the center of the hexamer. Post-translationally, contains two covalently linked bilin chromophores.

It is found in the plastid. The protein localises to the chloroplast thylakoid membrane. Its function is as follows. Light-harvesting photosynthetic bile pigment-protein from the phycobiliprotein complex (phycobilisome, PBS). Phycocyanin is the major phycobiliprotein in the PBS rod. The chain is R-phycocyanin-1 beta chain (rpcB) from Porphyridium purpureum (Red alga).